Here is a 403-residue protein sequence, read N- to C-terminus: Nucleoporin nup44 (403 aa).

Composition is skewed to polar residues over residues 1-31 (MAFSFGQQGSSIKAPSIGSTGVFGQSNTTKP) and 67-124 (FGKT…DETN). The disordered stretch occupies residues 1–124 (MAFSFGQQGS…NPTKPVDETN (124 aa)).

It localises to the cytoplasm. The protein resides in the nucleus. Functions as a component of the nuclear pore complex (NPC). NPC components, collectively referred to as nucleoporins (NUPs), can play the role of both NPC structural components and of docking or interaction partners for transiently associated nuclear transport factors. Active directional transport is assured by both, a Phe-Gly (FG) repeat affinity gradient for these transport factors across the NPC and a transport cofactor concentration gradient across the nuclear envelope. This Schizosaccharomyces pombe (strain 972 / ATCC 24843) (Fission yeast) protein is Nucleoporin nup44 (nup44).